We begin with the raw amino-acid sequence, 94 residues long: Dynein light chain, cytoplasmic (94 aa).

It belongs to the dynein light chain family. Homodimer. Cytoplasmic dynein consists of two catalytic heavy chains (HCs) and a number of non-catalytic subunits which present intermediate chains (ICs), light intermediate chains (LICs) and light chains (LCs). Component of the nuclear pore complex (NPC). The nuclear pore complex constitutes the exclusive means of nucleocytoplasmic transport. NPCs allow the passive diffusion of ions and small molecules and the active, nuclear transport receptor-mediated bidirectional transport of macromolecules such as proteins, RNAs, ribonucleoparticles (RNPs), and ribosomal subunits across the nuclear envelope. Due to its 8-fold rotational symmetry, all subunits are present with 8 copies or multiples thereof.

It localises to the cytoplasm. Its subcellular location is the cytoskeleton. The protein localises to the nucleus. The protein resides in the nuclear pore complex. Acts as one of several non-catalytic accessory components of the cytoplasmic dynein complex that are thought to be involved in linking dynein to cargos and to adapter proteins that regulate dynein function. Cytoplasmic dynein 1 acts as a motor for the intracellular retrograde motility of vesicles and organelles along microtubules. May play a role in changing or maintaining the spatial distribution of cytoskeletal structures. Also a component of the nuclear pore complex. The chain is Dynein light chain, cytoplasmic (nudG) from Emericella nidulans (strain FGSC A4 / ATCC 38163 / CBS 112.46 / NRRL 194 / M139) (Aspergillus nidulans).